Reading from the N-terminus, the 274-residue chain is Pantothenate synthetase (274 aa).

27 to 34 (MGALHKGH) provides a ligand contact to ATP. Histidine 34 serves as the catalytic Proton donor. Position 58 (glutamine 58) interacts with (R)-pantoate. Glutamine 58 is a binding site for beta-alanine. Residue 145 to 148 (GQKD) participates in ATP binding. Glutamine 151 provides a ligand contact to (R)-pantoate. 182–185 (LSSR) serves as a coordination point for ATP.

Belongs to the pantothenate synthetase family. In terms of assembly, homodimer.

The protein resides in the cytoplasm. The catalysed reaction is (R)-pantoate + beta-alanine + ATP = (R)-pantothenate + AMP + diphosphate + H(+). Its pathway is cofactor biosynthesis; (R)-pantothenate biosynthesis; (R)-pantothenate from (R)-pantoate and beta-alanine: step 1/1. Functionally, catalyzes the condensation of pantoate with beta-alanine in an ATP-dependent reaction via a pantoyl-adenylate intermediate. This chain is Pantothenate synthetase, found in Wolinella succinogenes (strain ATCC 29543 / DSM 1740 / CCUG 13145 / JCM 31913 / LMG 7466 / NCTC 11488 / FDC 602W) (Vibrio succinogenes).